We begin with the raw amino-acid sequence, 90 residues long: Progonadoliberin-3 (90 aa).

The first 23 residues, methionine 1–cysteine 23, serve as a signal peptide directing secretion. Glutamine 24 carries the post-translational modification Pyrrolidone carboxylic acid. Glycine 33 carries the glycine amide modification.

The protein belongs to the GnRH family. In terms of tissue distribution, expressed in neuron cell bodies of the nucleus olfactoretinalis.

It localises to the secreted. Its function is as follows. Stimulates the secretion of gonadotropins. The chain is Progonadoliberin-3 (gnrh3) from Oryzias latipes (Japanese rice fish).